We begin with the raw amino-acid sequence, 145 residues long: Putative pre-16S rRNA nuclease (145 aa).

It belongs to the YqgF nuclease family.

The protein resides in the cytoplasm. Functionally, could be a nuclease involved in processing of the 5'-end of pre-16S rRNA. In Pseudomonas fluorescens, this protein is Putative pre-16S rRNA nuclease.